The following is a 219-amino-acid chain: GTP cyclohydrolase 1 (219 aa).

Positions Met-1–Ala-37 are disordered. Over residues Asp-14–Ala-37 the composition is skewed to basic and acidic residues. Zn(2+) contacts are provided by Cys-108, His-111, and Cys-179.

Belongs to the GTP cyclohydrolase I family. As to quaternary structure, homomer.

The enzyme catalyses GTP + H2O = 7,8-dihydroneopterin 3'-triphosphate + formate + H(+). It functions in the pathway cofactor biosynthesis; 7,8-dihydroneopterin triphosphate biosynthesis; 7,8-dihydroneopterin triphosphate from GTP: step 1/1. This chain is GTP cyclohydrolase 1, found in Methylobacterium sp. (strain 4-46).